A 477-amino-acid chain; its full sequence is Delayed-rectifier potassium channel regulatory subunit KCNS2 (477 aa).

Residues 1-184 (MTRQSLWDLS…LALDNPGYSV (184 aa)) lie on the Cytoplasmic side of the membrane. The helical transmembrane segment at 185–206 (LSRVFSVLSILVVLGSIITMCL) threads the bilayer. Over 207-225 (NSLPDFQIPDSQGNPGEDP) the chain is Extracellular. A helical transmembrane segment spans residues 226–248 (RFEIVEHFGIAWFTFELVARFAV). Residues 249–259 (APDFLKFFKNA) are Cytoplasmic-facing. The helical transmembrane segment at 260–280 (LNLIDLMSIVPFYITLVVNLV) threads the bilayer. Residues 281–290 (VESSPTLANL) are Extracellular-facing. The helical; Voltage-sensor transmembrane segment at 291-311 (GRVAQVLRLMRIFRILKLARH) threads the bilayer. At 312–326 (STGLRSLGATLKYSY) the chain is on the cytoplasmic side. The helical transmembrane segment at 327–348 (KEVGLLLLYLSVGISIFSVVAY) threads the bilayer. Topologically, residues 349 to 361 (TIEKEENEGLATI) are extracellular. Residues 362 to 373 (PACWWWATVSMT) constitute an intramembrane region (helical). The Selectivity filter signature appears at 374-379 (TVGYGD). An intramembrane segment occupies 374 to 381 (TVGYGDVV). Residues 382–388 (PGTTAGK) are Extracellular-facing. The chain crosses the membrane as a helical span at residues 389–417 (LTASACILAGILVVVLPITLIFNKFSHFY). Residues 418–477 (RRQKQLESAMRSCDFGDGMKEVPSVNLRDYYAHKVKSLMASLTNMSRSSPSELSLDDSLH) lie on the Cytoplasmic side of the membrane.

This sequence belongs to the potassium channel family. S (TC 1.A.1.2) subfamily. Kv9.2/KCNS2 sub-subfamily. In terms of assembly, heterotetramer with KCNB1 and KCNB2. Does not form homomultimers. As to expression, detected in brain, lung and in pulmonary arteries.

Its subcellular location is the cell membrane. In terms of biological role, potassium channel regulatory subunit that modulate the delayed rectifier voltage-gated potassium channel activity of KCNB1 and KCNB2 by altering their kinetics, expression levels, and shifting the half-inactivation potential to more polarized values. While it does not form functional channels on its own, it can form functional heterotetrameric channels with KCNB1 and KCNB2. Each regulatory subunit has unique regulatory properties that can lead to extensive inhibition, significant changes in kinetics, and/or substantial shifts in the voltage dependencies of the inactivation process. The chain is Delayed-rectifier potassium channel regulatory subunit KCNS2 from Rattus norvegicus (Rat).